Consider the following 273-residue polypeptide: Ciliary microtubule inner protein 2B (273 aa).

Disordered regions lie at residues 59–85 and 123–164; these read TLLPPIQSPRSPVISKGRLPPRRGHER and RHGE…HASP. Over residues 123-159 the composition is skewed to basic and acidic residues; sequence RHGEQESHQLPDGAKGEREVEEDQLREAEEPPLKQEL.

Belongs to the CIMIP2 family. Microtubule inner protein component of sperm flagellar doublet microtubules. In terms of tissue distribution, expressed in airway epithelial cells.

The protein resides in the cytoplasm. It localises to the cytoskeleton. Its subcellular location is the cilium axoneme. The protein localises to the flagellum axoneme. In terms of biological role, microtubule inner protein (MIP) part of the dynein-decorated doublet microtubules (DMTs) in cilia axoneme, which is required for motile cilia beating. This chain is Ciliary microtubule inner protein 2B (Cimip2b), found in Mus musculus (Mouse).